Here is a 214-residue protein sequence, read N- to C-terminus: tRNA (guanine-N(7)-)-methyltransferase (214 aa).

S-adenosyl-L-methionine is bound by residues Glu-44, Glu-69, Asp-96, and Asp-118. Asp-118 is an active-site residue. Substrate-binding positions include Lys-122, Asp-154, and 191–194; that span reads TEYE.

This sequence belongs to the class I-like SAM-binding methyltransferase superfamily. TrmB family.

It catalyses the reaction guanosine(46) in tRNA + S-adenosyl-L-methionine = N(7)-methylguanosine(46) in tRNA + S-adenosyl-L-homocysteine. It participates in tRNA modification; N(7)-methylguanine-tRNA biosynthesis. In terms of biological role, catalyzes the formation of N(7)-methylguanine at position 46 (m7G46) in tRNA. In Listeria monocytogenes serotype 4b (strain F2365), this protein is tRNA (guanine-N(7)-)-methyltransferase.